The chain runs to 630 residues: YTH domain-containing family protein 1 (630 aa).

Disordered regions lie at residues Asp38–Gln113, Tyr160–Tyr183, and Gln200–His241. Positions Pro70 to Ser102 are enriched in polar residues. Residues Glu382–Phe590 form the YTH domain.

It belongs to the YTHDF family. YTHDF1 subfamily.

Its subcellular location is the cytoplasm. The protein localises to the P-body. Specifically recognizes and binds N6-methyladenosine (m6A)-containing mRNAs, and regulates their stability. M6A is a modification present at internal sites of mRNAs and some non-coding RNAs and plays a role in mRNA stability and processing. Plays a role in pathogenicity towards plant host. The protein is YTH domain-containing family protein 1 of Pyricularia oryzae (strain 70-15 / ATCC MYA-4617 / FGSC 8958) (Rice blast fungus).